The sequence spans 216 residues: Adenylate kinase (216 aa).

An ATP-binding site is contributed by 10 to 15 (GAGKGT). The segment at 30–59 (STGDIFRKNIKEGTELGKKAKEYMDQGLLV) is NMP. Residues Thr31, Arg36, 57 to 59 (LLV), 85 to 88 (GFPR), and Gln92 each bind AMP. Positions 126–163 (GRRICKSCGATYHVEFNPPKVEGVCDVCQGELYQRADD) are LID. ATP is bound at residue Arg127. The Zn(2+) site is built by Cys130 and Cys133. 136–137 (TY) is an ATP binding site. Cys150 and Cys153 together coordinate Zn(2+). AMP contacts are provided by Arg160 and Arg171. Gln199 is a binding site for ATP.

Belongs to the adenylate kinase family. Monomer.

Its subcellular location is the cytoplasm. The catalysed reaction is AMP + ATP = 2 ADP. The protein operates within purine metabolism; AMP biosynthesis via salvage pathway; AMP from ADP: step 1/1. Functionally, catalyzes the reversible transfer of the terminal phosphate group between ATP and AMP. Plays an important role in cellular energy homeostasis and in adenine nucleotide metabolism. The chain is Adenylate kinase from Clostridioides difficile (strain 630) (Peptoclostridium difficile).